Reading from the N-terminus, the 861-residue chain is MIGQITSGLFGGHDDSKKVKGTVVMMNKNVLDFTDLAGSLTGKIFDVLGQKVSFQLISSVQGDPTNGLQGKHSNPAYLENSLFTLTPLTAGSETAFGVTFDWNEEFGVPGAFIIKNMHINEFFLKSLTLEDVPNHGKVHFVCNSWVYPSLNYKSDRIFFANQPYLPSETPELLRKYRENELLTLRGDGTGKREAWDRIYDYDIYNDLGNPDQGKENVRTTLGGSAEYPYPRRGRTGRPPTRTDPKSESRIPLILSLDIYVPRDERFGHLKMSDFLTYALKSIVQFILPELHALFDGTPNEFDSFEDVLRLYEGRDQLPQGPLFKALTAAIPLEMIRELLRTDGEGILRFPTPLVIKDSKTAWRTDEEFAREMLAGVNPIIISRLQEFPPKSKLDPEAYGNQNSTITAEHIEDKLDGLTVDEAMNNNKLFILNHHDVIIPYLRRINTTITKTYASRTLLFLQDNGSLKPLAIELSLPHPDGDQFGVTSKVYTPSDQGVESSIWQLAKAYVAVNDTGVHQLISHWLNTHAVIEPFVIATNRQLSVLHPIHKLLYPHFRDTMNINASARQILVNAGGVLESTVFQSKFAMEMSAVVYKDWVFPDQALPADLVKRGVAVEDSSSPHGVRLLIEDYPYAVDGLEIWSAIKSWVTDYCSFYYGSDEEILKDNELQAWWKELREVGHGDKKNEPWWPEMKTPQELIDSCTTIIWIASALHAAVNFGQYPYAGYLPNRPTVSRRFMPEPGTPDYEELKRNPDKAFLKTITAQLQTLLGVSLVEILSRHTTDEIYLGQRESPEWTKDKEPLAAFDRFGKKLTDIEKQIIQRNGDNILTNRSGPVNAPYTLLFPTSEGGLTGKGIPNSVSI.

The PLAT domain occupies 29–160 (NVLDFTDLAG…NYKSDRIFFA (132 aa)). The region spanning 163 to 861 (PYLPSETPEL…GKGIPNSVSI (699 aa)) is the Lipoxygenase domain. The segment at 220-246 (TLGGSAEYPYPRRGRTGRPPTRTDPKS) is disordered. Positions 522, 527, 713, 717, and 861 each coordinate Fe cation.

Belongs to the lipoxygenase family. Monomer. Fe cation is required as a cofactor. As to expression, expressed in tubers. Detected in sprouts and flowers. but not in leaves or stems.

It is found in the cytoplasm. It carries out the reaction (9Z,12Z)-octadecadienoate + O2 = (9S)-hydroperoxy-(10E,12Z)-octadecadienoate. The protein operates within lipid metabolism; oxylipin biosynthesis. Functionally, plant lipoxygenases may be involved in a number of diverse aspects of plant physiology including growth and development, pest resistance, and senescence or responses to wounding. Catalyzes the hydroperoxidation of lipids containing a cis,cis-1,4-pentadiene structure. The chain is Probable linoleate 9S-lipoxygenase 7 (LOX1.7) from Solanum tuberosum (Potato).